Consider the following 326-residue polypeptide: Glyoxylate/hydroxypyruvate reductase B (326 aa).

Residues Arg-237 and Glu-266 contribute to the active site. The active-site Proton donor is His-285.

The protein belongs to the D-isomer specific 2-hydroxyacid dehydrogenase family. GhrB subfamily. As to quaternary structure, homodimer.

It localises to the cytoplasm. The enzyme catalyses glycolate + NADP(+) = glyoxylate + NADPH + H(+). The catalysed reaction is (R)-glycerate + NAD(+) = 3-hydroxypyruvate + NADH + H(+). It carries out the reaction (R)-glycerate + NADP(+) = 3-hydroxypyruvate + NADPH + H(+). Functionally, catalyzes the NADPH-dependent reduction of glyoxylate and hydroxypyruvate into glycolate and glycerate, respectively. This chain is Glyoxylate/hydroxypyruvate reductase B, found in Yersinia enterocolitica serotype O:8 / biotype 1B (strain NCTC 13174 / 8081).